Reading from the N-terminus, the 36-residue chain is uncharacterized protein (36 aa).

This is an uncharacterized protein from Halalkalibacterium halodurans (strain ATCC BAA-125 / DSM 18197 / FERM 7344 / JCM 9153 / C-125) (Bacillus halodurans).